The chain runs to 1008 residues: RNA cytidine acetyltransferase (1008 aa).

ATP contacts are provided by residues 282-291 (GRGKSAALGL) and arginine 443. Residues 531–713 (CLLGPVQRMD…VPVYLSQKSN (183 aa)) enclose the N-acetyltransferase domain. Acetyl-CoA contacts are provided by residues 601–603 (VAT), 608–614 (QRMGYGK), and asparagine 700. The residue at position 907 (serine 907) is a Phosphoserine. The interval 950 to 1008 (ALETNGTGGGSGLLSVKSGVKRLDGPIETREDGDLAAPLSKKKKKNNPKQRRSQGKSLI) is disordered. Positions 970 to 982 (KRLDGPIETREDG) are enriched in basic and acidic residues. Residues 989-1008 (SKKKKKNNPKQRRSQGKSLI) show a composition bias toward basic residues.

The protein belongs to the RNA cytidine acetyltransferase family. NAT10 subfamily. Component of the PRC1 complex (PSC, PC, PH and dRING1) in 0-12 hours Drosophila embryos. This complex is distinct from the Esc/E(z) complex, which contains many other PcG proteins like Esc, E(z), Su(z)12, HDAC1/Rpd3, Caf1-55 and probably Pho. The two complexes however cooperate and interact together during the first 3 hours of development to establish PcG silencing. Part of the small subunit (SSU) processome, composed of more than 70 proteins and the RNA chaperone small nucleolar RNA (snoRNA) U3.

The protein resides in the nucleus. Its subcellular location is the nucleolus. It catalyses the reaction a cytidine in 18S rRNA + acetyl-CoA + ATP + H2O = an N(4)-acetylcytidine in 18S rRNA + ADP + phosphate + CoA + H(+). The catalysed reaction is a cytidine in tRNA + acetyl-CoA + ATP + H2O = an N(4)-acetylcytidine in tRNA + ADP + phosphate + CoA + H(+). Functionally, RNA cytidine acetyltransferase with specificity toward both 18S rRNA and tRNAs. Catalyzes the formation of N(4)-acetylcytidine (ac4C) in 18S rRNA. Required for early nucleolar cleavages of precursor rRNA at sites A0, A1 and A2 during 18S rRNA synthesis. Catalyzes the formation of ac4C in serine and leucine tRNAs. Requires a tRNA-binding adapter protein for full tRNA acetyltransferase activity but not for 18S rRNA acetylation. Polycomb group (PcG) protein. PcG proteins act by forming multiprotein complexes, which are required to maintain the transcriptionally repressive state of homeotic genes throughout development. PcG proteins are not required to initiate repression, but to maintain it during later stages of development. They probably act via the methylation of histones, rendering chromatin heritably changed in its expressibility. Part of the small subunit (SSU) processome, first precursor of the small eukaryotic ribosomal subunit. During the assembly of the SSU processome in the nucleolus, many ribosome biogenesis factors, an RNA chaperone and ribosomal proteins associate with the nascent pre-rRNA and work in concert to generate RNA folding, modifications, rearrangements and cleavage as well as targeted degradation of pre-ribosomal RNA by the RNA exosome. The sequence is that of RNA cytidine acetyltransferase (l(1)G0020) from Drosophila melanogaster (Fruit fly).